The primary structure comprises 82 residues: MRLVVCLVFLASFALVCQGQVYKGGYTRPIPRPPPFVRPLPGGPIGPYNGCPVSCRGISFSQARSCCSRLGRCCHVGKGYSG.

The signal sequence occupies residues 1–19 (MRLVVCLVFLASFALVCQG). A Pyrrolidone carboxylic acid modification is found at Gln20. Cystine bridges form between Cys51/Cys66, Cys55/Cys73, and Cys67/Cys74. Ser81 carries the post-translational modification Serine amide.

In terms of processing, the N-terminus forms pyrrolidone carboxylic acid. In terms of tissue distribution, higher expression in hemocytes and to a lesser extent in heart, testis, gills, intestine, lymphoid organ and hepatopancreas. Traces in eyes and subcuticular epithelium. Not present in the brain.

The protein localises to the cytoplasmic granule. Functionally, antibacterial activity against M.luteus and E.coli bacteria. Antifungal activity against N.crassa and F.oxysporum. Presents chitin-binding activity. The sequence is that of Penaeidin-3a from Penaeus vannamei (Whiteleg shrimp).